The sequence spans 190 residues: Crossover junction endodeoxyribonuclease RuvC (190 aa).

Catalysis depends on residues Asp-7, Glu-67, and Asp-140. Mg(2+) contacts are provided by Asp-7, Glu-67, and Asp-140.

This sequence belongs to the RuvC family. In terms of assembly, homodimer which binds Holliday junction (HJ) DNA. The HJ becomes 2-fold symmetrical on binding to RuvC with unstacked arms; it has a different conformation from HJ DNA in complex with RuvA. In the full resolvosome a probable DNA-RuvA(4)-RuvB(12)-RuvC(2) complex forms which resolves the HJ. Requires Mg(2+) as cofactor.

It is found in the cytoplasm. It carries out the reaction Endonucleolytic cleavage at a junction such as a reciprocal single-stranded crossover between two homologous DNA duplexes (Holliday junction).. The RuvA-RuvB-RuvC complex processes Holliday junction (HJ) DNA during genetic recombination and DNA repair. Endonuclease that resolves HJ intermediates. Cleaves cruciform DNA by making single-stranded nicks across the HJ at symmetrical positions within the homologous arms, yielding a 5'-phosphate and a 3'-hydroxyl group; requires a central core of homology in the junction. The consensus cleavage sequence is 5'-(A/T)TT(C/G)-3'. Cleavage occurs on the 3'-side of the TT dinucleotide at the point of strand exchange. HJ branch migration catalyzed by RuvA-RuvB allows RuvC to scan DNA until it finds its consensus sequence, where it cleaves and resolves the cruciform DNA. This Fusobacterium nucleatum subsp. nucleatum (strain ATCC 25586 / DSM 15643 / BCRC 10681 / CIP 101130 / JCM 8532 / KCTC 2640 / LMG 13131 / VPI 4355) protein is Crossover junction endodeoxyribonuclease RuvC.